We begin with the raw amino-acid sequence, 201 residues long: Lymphotoxin-alpha (201 aa).

The first 27 residues, 1 to 27, serve as a signal peptide directing secretion; that stretch reads MTSSGVLCLLGALSLQVLLLQPPGAQG. Residues 23–52 are disordered; it reads PGAQGAPNPDNSHSSSPAPPQTAQHLSQKS. Residues 31-51 show a composition bias toward polar residues; the sequence is PDNSHSSSPAPPQTAQHLSQK. The THD domain occupies 60 to 201; sequence PAAHLVGDPS…SSVFFGAFAL (142 aa). N-linked (GlcNAc...) asparagine glycosylation is present at Asn-93. Cysteines 117 and 152 form a disulfide.

It belongs to the tumor necrosis factor family. In terms of assembly, homotrimer, and heterotrimer of either two LTB and one LTA subunits or (less prevalent) two LTA and one LTB subunits. Interacts with TNFRSF14.

It localises to the secreted. It is found in the membrane. Functionally, cytokine that in its homotrimeric form binds to TNFRSF1A/TNFR1, TNFRSF1B/TNFBR and TNFRSF14/HVEM. In its heterotrimeric form with LTB binds to TNFRSF3/LTBR. Lymphotoxin is produced by lymphocytes and is cytotoxic for a wide range of tumor cells in vitro and in vivo. This chain is Lymphotoxin-alpha (LTA), found in Notamacropus eugenii (Tammar wallaby).